A 417-amino-acid chain; its full sequence is Serine hydroxymethyltransferase (417 aa).

(6S)-5,6,7,8-tetrahydrofolate-binding positions include L121 and 125–127; that span reads GHL. At K229 the chain carries N6-(pyridoxal phosphate)lysine. Residue 355 to 357 coordinates (6S)-5,6,7,8-tetrahydrofolate; it reads SSF.

This sequence belongs to the SHMT family. Homodimer. The cofactor is pyridoxal 5'-phosphate.

Its subcellular location is the cytoplasm. It carries out the reaction (6R)-5,10-methylene-5,6,7,8-tetrahydrofolate + glycine + H2O = (6S)-5,6,7,8-tetrahydrofolate + L-serine. It participates in one-carbon metabolism; tetrahydrofolate interconversion. Its pathway is amino-acid biosynthesis; glycine biosynthesis; glycine from L-serine: step 1/1. Its function is as follows. Catalyzes the reversible interconversion of serine and glycine with tetrahydrofolate (THF) serving as the one-carbon carrier. This reaction serves as the major source of one-carbon groups required for the biosynthesis of purines, thymidylate, methionine, and other important biomolecules. Also exhibits THF-independent aldolase activity toward beta-hydroxyamino acids, producing glycine and aldehydes, via a retro-aldol mechanism. The sequence is that of Serine hydroxymethyltransferase from Baumannia cicadellinicola subsp. Homalodisca coagulata.